Reading from the N-terminus, the 440-residue chain is Transposon Ty1-DR3 Gag polyprotein (440 aa).

3 stretches are compositionally biased toward polar residues: residues methionine 1 to proline 10, threonine 48 to serine 60, and glutamine 127 to phenylalanine 152. Disordered regions lie at residues methionine 1–glutamine 93, proline 126–proline 173, and glycine 352–tyrosine 440. The span at threonine 153–threonine 165 shows a compositional bias: low complexity. The tract at residues asparagine 299–histidine 401 is RNA-binding. The segment covering asparagine 402 to asparagine 428 has biased composition (polar residues). A Phosphoserine modification is found at serine 416. Over residues asparagine 429–tyrosine 440 the composition is skewed to basic and acidic residues.

As to quaternary structure, homotrimer.

It localises to the cytoplasm. Functionally, capsid protein (CA) is the structural component of the virus-like particle (VLP), forming the shell that encapsulates the retrotransposons dimeric RNA genome. The particles are assembled from trimer-clustered units and there are holes in the capsid shells that allow for the diffusion of macromolecules. CA also has nucleocapsid-like chaperone activity, promoting primer tRNA(i)-Met annealing to the multipartite primer-binding site (PBS), dimerization of Ty1 RNA and initiation of reverse transcription. The chain is Transposon Ty1-DR3 Gag polyprotein (TY1A-DR3) from Saccharomyces cerevisiae (strain ATCC 204508 / S288c) (Baker's yeast).